Reading from the N-terminus, the 503-residue chain is Maturase K (503 aa).

The protein belongs to the intron maturase 2 family. MatK subfamily.

It is found in the plastid. The protein resides in the chloroplast. Usually encoded in the trnK tRNA gene intron. Probably assists in splicing its own and other chloroplast group II introns. The chain is Maturase K from Eucalyptus globulus subsp. globulus (Tasmanian blue gum).